A 358-amino-acid chain; its full sequence is Heat-inducible transcription repressor HrcA (358 aa).

Belongs to the HrcA family.

Its function is as follows. Negative regulator of class I heat shock genes (grpE-dnaK-dnaJ and groELS operons). Prevents heat-shock induction of these operons. In Caulobacter vibrioides (strain ATCC 19089 / CIP 103742 / CB 15) (Caulobacter crescentus), this protein is Heat-inducible transcription repressor HrcA.